We begin with the raw amino-acid sequence, 322 residues long: Ribose-phosphate pyrophosphokinase (322 aa).

Residues 43–45 (DGE) and 102–103 (RQ) each bind ATP. Mg(2+)-binding residues include His-137 and Asp-177. Lys-201 is a catalytic residue. Residues Arg-203, Asp-227, and 231–235 (DTAGT) each bind D-ribose 5-phosphate.

It belongs to the ribose-phosphate pyrophosphokinase family. Class I subfamily. As to quaternary structure, homohexamer. It depends on Mg(2+) as a cofactor.

The protein localises to the cytoplasm. The enzyme catalyses D-ribose 5-phosphate + ATP = 5-phospho-alpha-D-ribose 1-diphosphate + AMP + H(+). The protein operates within metabolic intermediate biosynthesis; 5-phospho-alpha-D-ribose 1-diphosphate biosynthesis; 5-phospho-alpha-D-ribose 1-diphosphate from D-ribose 5-phosphate (route I): step 1/1. In terms of biological role, involved in the biosynthesis of the central metabolite phospho-alpha-D-ribosyl-1-pyrophosphate (PRPP) via the transfer of pyrophosphoryl group from ATP to 1-hydroxyl of ribose-5-phosphate (Rib-5-P). This Xylella fastidiosa (strain 9a5c) protein is Ribose-phosphate pyrophosphokinase.